The primary structure comprises 152 residues: Succinate dehydrogenase [ubiquinone] cytochrome b small subunit, mitochondrial (152 aa).

Residues 1–21 constitute a mitochondrion transit peptide; that stretch reads MATLLRVSSLCRANRASAFKS. At 22–56 the chain is on the mitochondrial matrix side; the sequence is LLIRPVPCLTQDHHMVQTSQIHTSPNHHAGSKAAS. Residues 57–78 traverse the membrane as a helical segment; it reads MHWTSERALSVALLGLLPAAYL. At 79–83 the chain is on the mitochondrial intermembrane side; it reads YPGAA. The helical transmembrane segment at 84 to 104 threads the bilayer; that stretch reads MDYSLAAALTLHGHWGLGQVV. His95 contributes to the heme b binding site. The Mitochondrial matrix segment spans residues 105 to 113; the sequence is TDYVHGDAK. Tyr107 is an a ubiquinone binding site. Residues 114–135 traverse the membrane as a helical segment; it reads IKMANTSLFALSALTFAGLCYF. Residues 136–152 are Mitochondrial intermembrane-facing; sequence NYHDVGICKAVSMLWSL.

The protein belongs to the CybS family. As to quaternary structure, component of complex II composed of four subunits: the flavoprotein (FP) SDHA, iron-sulfur protein (IP) SDHB, and a cytochrome b560 composed of SDHC and SDHD.

Its subcellular location is the mitochondrion inner membrane. It participates in carbohydrate metabolism; tricarboxylic acid cycle. Functionally, membrane-anchoring subunit of succinate dehydrogenase (SDH) that is involved in complex II of the mitochondrial electron transport chain and is responsible for transferring electrons from succinate to ubiquinone (coenzyme Q). SDH also oxidizes malate to the non-canonical enol form of oxaloacetate, enol-oxaloacetate. Enol-oxaloacetate, which is a potent inhibitor of the succinate dehydrogenase activity, is further isomerized into keto-oxaloacetate. This Xenopus tropicalis (Western clawed frog) protein is Succinate dehydrogenase [ubiquinone] cytochrome b small subunit, mitochondrial (sdhd).